A 258-amino-acid polypeptide reads, in one-letter code: Triosephosphate isomerase (258 aa).

9 to 11 (NWK) lines the substrate pocket. Histidine 105 (electrophile) is an active-site residue. Residue glutamate 176 is the Proton acceptor of the active site. Substrate is bound by residues glycine 182 and serine 214.

This sequence belongs to the triosephosphate isomerase family. In terms of assembly, homodimer.

It localises to the cytoplasm. The catalysed reaction is D-glyceraldehyde 3-phosphate = dihydroxyacetone phosphate. Its pathway is carbohydrate biosynthesis; gluconeogenesis. The protein operates within carbohydrate degradation; glycolysis; D-glyceraldehyde 3-phosphate from glycerone phosphate: step 1/1. Its function is as follows. Involved in the gluconeogenesis. Catalyzes stereospecifically the conversion of dihydroxyacetone phosphate (DHAP) to D-glyceraldehyde-3-phosphate (G3P). This is Triosephosphate isomerase from Mycoplasmopsis agalactiae (strain NCTC 10123 / CIP 59.7 / PG2) (Mycoplasma agalactiae).